A 396-amino-acid polypeptide reads, in one-letter code: Septu protein PtuA (396 aa).

Functionally, component of antiviral defense system Septu type I, composed of PtuA and PtuB. Expression of Septu type I in B.subtilis (strain BEST7003) confers resistance to phages SBSphiC and SBSphiJ. May be an ATPase. The protein is Septu protein PtuA of Bacillus thuringiensis.